The sequence spans 552 residues: MSFDGFFLHHMTAELRANLEGGRIQKINQPFEQEIVLNIRSNRQSHKLLLSAHSVFGRVQLTQSDFTNPKVPNTFTMILRKYLQGAIIEEIRQLDNDRILEFSVSNKDEIGDHIQATLIVEIMGKHSNIILVDKSEQKIIEAIKHVGFSQNSYRTILPGSTYIRPPETHSLNPYTVSDEKLFEILSTQELSPKNLQQVFQGLGRDTASELANHLQIDRLKNFRAFFDQATQPSLTDKSYAALPFANSPENQPHFESLSSLLDFYYQDKAERDRVAQQANELIKRVASELEKNRKKLIKQEQELADTETAELVRQKGELLTTYLHQVPNDQSSVRLDNYYTGKELEIELDVALTPSQNAQRYFKKYQKLKEAVKHLTNLIEETKSTIVYLESVDTMLGQASLAEIDEIREELIETGYLKRRHREKIHKRQKPERYLATDGKTIILVGKNNLQNDELTFKMAKKGELWFHAKDIPGSHVVITDNLDPSDEVKTDAAELAAYFSKARHSNLVQVDMIEAKKLHKPTGGKPGFVTYRGQKTLRVTPTEDKIKSMKI.

Coiled coils occupy residues 271–317 (RDRV…QKGE) and 357–398 (NAQR…MLGQ).

Belongs to the NEMF family. In terms of assembly, associates with stalled 50S ribosomal subunits, binds to RqcH. Recombinant protein interacts with the N-terminal 30 kDa of human fibronectin (FN1).

Functionally, key component of the ribosome quality control system (RQC), a ribosome-associated complex that mediates the extraction of incompletely synthesized nascent chains from stalled ribosomes and their subsequent degradation. RqcH recruits Ala-charged tRNA, and with RqcP directs the elongation of stalled nascent chains on 50S ribosomal subunits, leading to non-templated C-terminal alanine extensions (Ala tail). The Ala tail promotes nascent chain degradation. May add between 1 and at least 8 Ala residues. Binds to stalled 50S ribosomal subunits. In Streptococcus suis (strain 05ZYH33), this protein is Rqc2 homolog RqcH.